A 188-amino-acid polypeptide reads, in one-letter code: Peptidyl-tRNA hydrolase (188 aa).

Tyr-14 contributes to the tRNA binding site. The active-site Proton acceptor is His-19. Tyr-64, Asn-66, and Asn-112 together coordinate tRNA.

This sequence belongs to the PTH family. As to quaternary structure, monomer.

The protein localises to the cytoplasm. The catalysed reaction is an N-acyl-L-alpha-aminoacyl-tRNA + H2O = an N-acyl-L-amino acid + a tRNA + H(+). Its function is as follows. Hydrolyzes ribosome-free peptidyl-tRNAs (with 1 or more amino acids incorporated), which drop off the ribosome during protein synthesis, or as a result of ribosome stalling. Catalyzes the release of premature peptidyl moieties from peptidyl-tRNA molecules trapped in stalled 50S ribosomal subunits, and thus maintains levels of free tRNAs and 50S ribosomes. The sequence is that of Peptidyl-tRNA hydrolase from Clostridium perfringens (strain ATCC 13124 / DSM 756 / JCM 1290 / NCIMB 6125 / NCTC 8237 / Type A).